Consider the following 1770-residue polypeptide: Serine/threonine-protein kinase RIM15 (1770 aa).

Positions 334–358 (HSLSTFPQDNGNNNNNNNNNNNNNN) are disordered. The segment covering 343–358 (NGNNNNNNNNNNNNNN) has biased composition (low complexity). Ser-380 and Ser-476 each carry phosphoserine. Disordered regions lie at residues 530-563 (TPTA…LDSN) and 583-694 (STIS…NSVL). Residues 583–601 (STISIDRDNNTNSRGSSMK) show a composition bias toward polar residues. The span at 611–632 (SRTSNSERPSSSSSRLGIRSRS) shows a compositional bias: low complexity. Positions 637 to 660 (QKIEYSHVDNDDRTNEMLSRDKDS) are enriched in basic and acidic residues. The span at 669-692 (TTITSSTQATTTGTKTNSNNSTNS) shows a compositional bias: low complexity. Residue Thr-704 is modified to Phosphothreonine. Residues Ser-709, Ser-733, Ser-736, and Ser-737 each carry the phosphoserine modification. A Phosphothreonine modification is found at Thr-747. One can recognise a Protein kinase domain in the interval 794–1254 (YDILKPISKG…IQEIKDHPYF (461 aa)). ATP-binding positions include 800–808 (ISKGAYGSV) and Lys-823. The active-site Proton acceptor is the Asp-918. Positions 970-980 (NNFTMNNNNSN) are enriched in low complexity. The tract at residues 970–1032 (NNFTMNNNNS…MTPTPSTNTV (63 aa)) is disordered. Polar residues predominate over residues 981–990 (HSQLSTPDSF). The span at 1014-1031 (YSSTSNSHSMTPTPSTNT) shows a compositional bias: low complexity. A phosphoserine mark is found at Ser-1044, Ser-1048, and Ser-1064. Thr-1075 bears the Phosphothreonine; by PHO85 mark. Positions 1255–1320 (KNVDWDHVYD…NTDVSELSAA (66 aa)) constitute an AGC-kinase C-terminal domain. Low complexity predominate over residues 1378 to 1391 (TGYITPNGTGTTTT). The disordered stretch occupies residues 1378-1403 (TGYITPNGTGTTTTSAKNSPNLKNLS). A compositionally biased stretch (polar residues) spans 1392–1401 (SAKNSPNLKN). Ser-1421 carries the post-translational modification Phosphoserine. 2 disordered regions span residues 1448–1507 (KSEH…STFG) and 1519–1572 (FSTR…PANT). Low complexity predominate over residues 1463–1481 (SSASLMGSSSDGSVSTPGS). Residues Ser-1531, Ser-1538, Ser-1542, and Ser-1565 each carry the phosphoserine modification. In terms of domain architecture, Response regulatory spans 1636–1750 (DVLVCEPIPI…ELKKLVAKYA (115 aa)). The residue at position 1764 (Ser-1764) is a Phosphoserine.

This sequence belongs to the protein kinase superfamily. Ser/Thr protein kinase family. In terms of assembly, interacts with the cyclin-dependent kinase (CDK) PHO85 and IGO1. In terms of processing, autophosphorylated. Phosphorylation by PKA strongly inhibits kinase activity. Phosphorylation by cyclin-CDK PHO80-PHO85 under favorable growth condition causes inactivation of RIM15 by promoting its export to the cytoplasm.

Its subcellular location is the cytoplasm. The protein resides in the nucleus. It catalyses the reaction L-seryl-[protein] + ATP = O-phospho-L-seryl-[protein] + ADP + H(+). It carries out the reaction L-threonyl-[protein] + ATP = O-phospho-L-threonyl-[protein] + ADP + H(+). Its activity is regulated as follows. Kinase activity is inhibited by phosphorylation by cAMP-dependent protein kinase (PKA). Its function is as follows. Protein kinase that positively regulates proper entry into stationary phase of cells under nutrient starvation conditions. Involved in glycogen and trehalose accumulation, derepression of stress-induced genes, induction of thermotolerance and starvation resistance, and proper G1 cell cycle arrest. Also involved in the activation of a meiotic genes activation pathway. Phosphorylates IGO1 and IGO2, both involved in the TORC1 control of gene expression and chronological life span. The sequence is that of Serine/threonine-protein kinase RIM15 (RIM15) from Saccharomyces cerevisiae (strain ATCC 204508 / S288c) (Baker's yeast).